Here is a 368-residue protein sequence, read N- to C-terminus: 3-isopropylmalate dehydrogenase (368 aa).

77–88 is an NAD(+) binding site; the sequence is GPKWGTGAVRPE. Substrate contacts are provided by Arg-95, Arg-105, Arg-134, and Asp-226. Residues Asp-226, Asp-251, and Asp-255 each contribute to the Mg(2+) site. 290–301 is an NAD(+) binding site; sequence GSAPDLPANKVN.

It belongs to the isocitrate and isopropylmalate dehydrogenases family. Homodimer. Requires Mg(2+) as cofactor. The cofactor is Mn(2+).

It localises to the cytoplasm. The enzyme catalyses (2R,3S)-3-isopropylmalate + NAD(+) = 4-methyl-2-oxopentanoate + CO2 + NADH. It participates in amino-acid biosynthesis; L-leucine biosynthesis; L-leucine from 3-methyl-2-oxobutanoate: step 3/4. In terms of biological role, catalyzes the oxidation of 3-carboxy-2-hydroxy-4-methylpentanoate (3-isopropylmalate) to 3-carboxy-4-methyl-2-oxopentanoate. The product decarboxylates to 4-methyl-2 oxopentanoate. The sequence is that of 3-isopropylmalate dehydrogenase (LEU2) from Kodamaea ohmeri (Yeast).